We begin with the raw amino-acid sequence, 120 residues long: Large ribosomal subunit protein uL14 (120 aa).

It belongs to the universal ribosomal protein uL14 family. As to quaternary structure, part of the 50S ribosomal subunit. Forms a cluster with proteins L3 and L19. In the 70S ribosome, L14 and L19 interact and together make contacts with the 16S rRNA in bridges B5 and B8.

Functionally, binds to 23S rRNA. Forms part of two intersubunit bridges in the 70S ribosome. The sequence is that of Large ribosomal subunit protein uL14 from Dictyoglomus thermophilum (strain ATCC 35947 / DSM 3960 / H-6-12).